The following is a 119-amino-acid chain: Large ribosomal subunit protein uL18 (119 aa).

The protein belongs to the universal ribosomal protein uL18 family. Part of the 50S ribosomal subunit; part of the 5S rRNA/L5/L18/L25 subcomplex. Contacts the 5S and 23S rRNAs.

Functionally, this is one of the proteins that bind and probably mediate the attachment of the 5S RNA into the large ribosomal subunit, where it forms part of the central protuberance. The polypeptide is Large ribosomal subunit protein uL18 (Ruegeria sp. (strain TM1040) (Silicibacter sp.)).